Reading from the N-terminus, the 367-residue chain is Flagellar P-ring protein (367 aa).

The N-terminal stretch at 1–21 is a signal peptide; sequence MYVFKALAGIVLALVATLAHA.

This sequence belongs to the FlgI family. In terms of assembly, the basal body constitutes a major portion of the flagellar organelle and consists of four rings (L,P,S, and M) mounted on a central rod.

Its subcellular location is the periplasm. It is found in the bacterial flagellum basal body. In terms of biological role, assembles around the rod to form the L-ring and probably protects the motor/basal body from shearing forces during rotation. This Salmonella choleraesuis (strain SC-B67) protein is Flagellar P-ring protein.